The primary structure comprises 490 residues: Bifunctional IPC transferase and DIPP synthase (490 aa).

Residues 72–290 (LMKAVILAAG…RANRALVSAA (219 aa)) are mobA-like NTP transferase. CTP is bound by residues 78 to 80 (LAA), Lys91, Asp144, and Glu180. Residue Glu180 coordinates Mg(2+). The segment at 291-490 (VKGSGDGFIS…VTLLAVLVSK (200 aa)) is CDP-alcohol phosphatidyltransferases. The next 4 helical transmembrane spans lie at 329 to 349 (FLVG…AGLL), 389 to 409 (FLAI…FAIF), 447 to 467 (IFLI…IFWM), and 468 to 488 (FLFV…AVLV).

In the N-terminal section; belongs to the MobA family. This sequence in the C-terminal section; belongs to the CDP-alcohol phosphatidyltransferase class-I family. In terms of assembly, forms a mixture of monomers and dimers in solution, with prevalence of the monomeric form. Requires Mg(2+) as cofactor.

It localises to the membrane. The catalysed reaction is 1D-myo-inositol 3-phosphate + CTP + H(+) = CDP-1L-myo-inositol + diphosphate. It catalyses the reaction CDP-1L-myo-inositol + 1D-myo-inositol 3-phosphate = bis(1L-myo-inositol) 3,1'-phosphate 1-phosphate + CMP + H(+). Its function is as follows. Involved in biosynthesis of di-myo-inositol phosphate (DIP), a widespread organic solute in microorganisms adapted to hot environments. Catalyzes the condensation of CTP and L-myo-inositol-1-phosphate into CDP-L-myo-inositol, as well as the biosynthesis of di-myo-inositol-1,3'-phosphate-1'-phosphate (DIPP) from CDP-L-myo-inositol and L-myo-inositol-1-phosphate. The cytidylyltransferase is absolutely specific for CTP and L-myo-inositol-1-P. The DIPP synthase uses only L-myoinositol-1-phosphate as an alcohol acceptor, but CDP-glycerol, as well as CDP-L-myo-inositol and CDP-D-myoinositol, are recognized as alcohol donors. The polypeptide is Bifunctional IPC transferase and DIPP synthase (Archaeoglobus fulgidus (strain ATCC 49558 / DSM 4304 / JCM 9628 / NBRC 100126 / VC-16)).